The sequence spans 231 residues: 2-C-methyl-D-erythritol 4-phosphate cytidylyltransferase (231 aa).

Belongs to the IspD/TarI cytidylyltransferase family. IspD subfamily.

The enzyme catalyses 2-C-methyl-D-erythritol 4-phosphate + CTP + H(+) = 4-CDP-2-C-methyl-D-erythritol + diphosphate. It functions in the pathway isoprenoid biosynthesis; isopentenyl diphosphate biosynthesis via DXP pathway; isopentenyl diphosphate from 1-deoxy-D-xylulose 5-phosphate: step 2/6. Its function is as follows. Catalyzes the formation of 4-diphosphocytidyl-2-C-methyl-D-erythritol from CTP and 2-C-methyl-D-erythritol 4-phosphate (MEP). This is 2-C-methyl-D-erythritol 4-phosphate cytidylyltransferase from Clostridium novyi (strain NT).